Reading from the N-terminus, the 757-residue chain is Cell cycle progression protein 1 (757 aa).

The Cytoplasmic segment spans residues 1–217; the sequence is MSENSSDSDS…KRQFSSGLNK (217 aa). The segment at 1–308 is interaction with MCF2L and SRC; it reads MSENSSDSDS…QKTNLATENQ (308 aa). The tract at residues 152–207 is disordered; it reads VFSSQPSDDESSSDETSNQPSPAFRRRRARKKTVSASESEDRLVAEQETEPSKELS. A compositionally biased stretch (basic residues) spans 175–184; that stretch reads FRRRRARKKT. A Phosphoserine modification is found at Ser-186. Over residues 190-207 the composition is skewed to basic and acidic residues; the sequence is SEDRLVAEQETEPSKELS. Residues 218–238 traverse the membrane as a helical; Signal-anchor for type II membrane protein segment; that stretch reads CVILALVIAISMGFGHFYGTI. Residues 239-757 lie on the Lumenal side of the membrane; it reads QIQKRQQLVR…YIKPCHYSSL (519 aa). 2 coiled-coil regions span residues 248–272 and 306–450; these read RKIH…QESF and ENQY…LWER. The span at 458 to 468 shows a compositional bias: basic and acidic residues; sequence QNGKQGTDGKK. Positions 458 to 483 are disordered; that stretch reads QNGKQGTDGKKKGGRGSHRAKNKSKE. A compositionally biased stretch (basic residues) spans 469 to 479; it reads KGGRGSHRAKN. The stretch at 504 to 530 forms a coiled coil; it reads VRHHKEKIKQAKEAVKENLKKFSDSVK.

It belongs to the CCPG1 family. As to quaternary structure, interacts with MCF2L. May interact with MCF2, ARHGEF1, BCR, VAV1 and FGD1, but not with TIAM1. Interacts with GTP-bound CDC42 and SRC.

The protein resides in the cytoplasmic granule membrane. Its function is as follows. Acts as an assembly platform for Rho protein signaling complexes. Limits guanine nucleotide exchange activity of MCF2L toward RHOA, which results in an inhibition of both its transcriptional activation ability and its transforming activity. Does not inhibit activity of MCF2L toward CDC42, or activity of MCF2 toward either RHOA or CDC42. May be involved in cell cycle regulation. The sequence is that of Cell cycle progression protein 1 (CCPG1) from Homo sapiens (Human).